We begin with the raw amino-acid sequence, 172 residues long: Putative acetyltransferase YvoF (172 aa).

This sequence belongs to the transferase hexapeptide repeat family.

This is Putative acetyltransferase YvoF (yvoF) from Bacillus subtilis (strain 168).